Consider the following 437-residue polypeptide: Na(+)/H(+) antiporter NhaA (437 aa).

The next 11 membrane-spanning stretches (helical) occupy residues 12–32 (SMNI…AVIA), 65–85 (LTMI…MVGL), 103–123 (ALPF…YSMV), 133–153 (GLAI…SLLG), 162–182 (IFLT…IAIF), 186–206 (HVAY…YFIG), 214–234 (IFFL…GIHS), 308–328 (GAVN…VMFS), 333–353 (VIGG…FLGI), 377–397 (ISGV…IANL), and 412–432 (LGVL…LHWV).

Belongs to the NhaA Na(+)/H(+) (TC 2.A.33) antiporter family.

Its subcellular location is the cell inner membrane. It catalyses the reaction Na(+)(in) + 2 H(+)(out) = Na(+)(out) + 2 H(+)(in). Na(+)/H(+) antiporter that extrudes sodium in exchange for external protons. This is Na(+)/H(+) antiporter NhaA from Bacteroides fragilis (strain ATCC 25285 / DSM 2151 / CCUG 4856 / JCM 11019 / LMG 10263 / NCTC 9343 / Onslow / VPI 2553 / EN-2).